The following is a 1617-amino-acid chain: Mediator of RNA polymerase II transcription subunit 12 (1617 aa).

2 disordered regions span residues 25-114 (RADL…PSLS) and 1519-1552 (PVSI…QPAF). Polar residues predominate over residues 40 to 51 (EQPSMPVAQTQG). The segment covering 66 to 80 (VLEREPPAKRLKIDV) has biased composition (basic and acidic residues). Polar residues predominate over residues 99-111 (SKSTPGATTSKPP). Residues 1523 to 1543 (PSPAASGSTPAPTPSGNSTGG) show a composition bias toward low complexity.

It belongs to the Mediator complex subunit 12 family. In terms of assembly, component of the srb8-11 complex, which itself associates with the Mediator complex.

It localises to the nucleus. Component of the srb8-11 complex. The srb8-11 complex is a regulatory module of the Mediator complex which is itself involved in regulation of basal and activated RNA polymerase II-dependent transcription. The srb8-11 complex may be involved in the transcriptional repression of a subset of genes regulated by Mediator. It may inhibit the association of the Mediator complex with RNA polymerase II to form the holoenzyme complex. The polypeptide is Mediator of RNA polymerase II transcription subunit 12 (srb8) (Aspergillus fumigatus (strain ATCC MYA-4609 / CBS 101355 / FGSC A1100 / Af293) (Neosartorya fumigata)).